A 352-amino-acid polypeptide reads, in one-letter code: MKKVCIIGASGFTGGELLRLLLSHSGVEVVCATSRKFKGEFVYRVHPNLRGFTQLKFVEPTIDAALKADVVFLALPHGESVKWVPKLYESGVAVFDLSADFRLKDPNAYVEWYKWPQPHPYPDLLQKAVYGQPELHRDELVGAKLVAVPGCMATASILMLAPLAKYGQLGEVPPVVDAKIGSSGAGAEGSIVDLHSYRTYVVRPYEPVHHRHIAEIEQELSRLAGRRVRVAFTPHAVDIVRGIFTTGHVYLDKLPAEADMWKYYRSMYGDSKFIRIVKDRLGISRYPNVKYVLGSNVVDVGFELDPRLNRVVTFAAIDNLVRGASGQAVQAFNVAMGFPEDEGLRQIPVAPI.

NADP(+) contacts are provided by residues 10–13 (SGFT) and 34–36 (SRK). Cysteine 151 is a catalytic residue. Position 319 (asparagine 319) interacts with NADP(+).

Belongs to the NAGSA dehydrogenase family. Type 1 subfamily. LysY sub-subfamily.

The protein resides in the cytoplasm. It carries out the reaction [amino-group carrier protein]-C-terminal-N-(1-carboxy-5-oxopentan-1-yl)-L-glutamine + phosphate + NADP(+) = [amino-group carrier protein]-C-terminal-N-(1-carboxy-5-phosphooxy-5-oxopentan-1-yl)-L-glutamine + NADPH + H(+). The catalysed reaction is [amino-group carrier protein]-C-terminal-gamma-(L-glutamyl-5-semialdehyde)-L-glutamate + phosphate + NADP(+) = [amino-group carrier protein]-C-terminal-gamma-(5-phospho-L-glutamyl)-L-glutamate + NADPH + H(+). The protein operates within amino-acid biosynthesis; L-lysine biosynthesis via AAA pathway; L-lysine from L-alpha-aminoadipate (Thermus route): step 3/5. It participates in amino-acid biosynthesis; L-arginine biosynthesis. Functionally, involved in both the arginine and lysine biosynthetic pathways. This is Putative [LysW]-L-2-aminoadipate/[LysW]-L-glutamate phosphate reductase from Pyrobaculum neutrophilum (strain DSM 2338 / JCM 9278 / NBRC 100436 / V24Sta) (Thermoproteus neutrophilus).